The chain runs to 245 residues: 1-(5-phosphoribosyl)-5-[(5-phosphoribosylamino)methylideneamino] imidazole-4-carboxamide isomerase (245 aa).

The Proton acceptor role is filled by Asp-7. Asp-129 serves as the catalytic Proton donor.

The protein belongs to the HisA/HisF family.

Its subcellular location is the cytoplasm. It carries out the reaction 1-(5-phospho-beta-D-ribosyl)-5-[(5-phospho-beta-D-ribosylamino)methylideneamino]imidazole-4-carboxamide = 5-[(5-phospho-1-deoxy-D-ribulos-1-ylimino)methylamino]-1-(5-phospho-beta-D-ribosyl)imidazole-4-carboxamide. The protein operates within amino-acid biosynthesis; L-histidine biosynthesis; L-histidine from 5-phospho-alpha-D-ribose 1-diphosphate: step 4/9. This chain is 1-(5-phosphoribosyl)-5-[(5-phosphoribosylamino)methylideneamino] imidazole-4-carboxamide isomerase, found in Shewanella frigidimarina (strain NCIMB 400).